Here is a 676-residue protein sequence, read N- to C-terminus: DNA ligase (676 aa).

Residues 35 to 39 (DNEYD), 84 to 85 (SL), and Glu-115 each bind NAD(+). Residue Lys-117 is the N6-AMP-lysine intermediate of the active site. 4 residues coordinate NAD(+): Arg-138, Glu-177, Lys-294, and Lys-318. The Zn(2+) site is built by Cys-412, Cys-415, Cys-430, and Cys-436. One can recognise a BRCT domain in the interval 595-676 (PTRQPLNGES…FLAFLAQYSA (82 aa)).

The protein belongs to the NAD-dependent DNA ligase family. LigA subfamily. Mg(2+) serves as cofactor. Requires Mn(2+) as cofactor.

The enzyme catalyses NAD(+) + (deoxyribonucleotide)n-3'-hydroxyl + 5'-phospho-(deoxyribonucleotide)m = (deoxyribonucleotide)n+m + AMP + beta-nicotinamide D-nucleotide.. Functionally, DNA ligase that catalyzes the formation of phosphodiester linkages between 5'-phosphoryl and 3'-hydroxyl groups in double-stranded DNA using NAD as a coenzyme and as the energy source for the reaction. It is essential for DNA replication and repair of damaged DNA. In Acinetobacter baylyi (strain ATCC 33305 / BD413 / ADP1), this protein is DNA ligase.